The following is a 359-amino-acid chain: MKTGSILAALVASASAHTIFQKVSVNGADQGQLKGIRAPANNNPVTDVMSSDIICNAVTMKDSNVLTVPAGAKVGHFWGHEIGGAAGPNDADNPIAASHKGPIMVYLAKVDNAATTGTSGLKWFKVAEAGLSNGKWAVDDLIANNGWSYFDMPTCIAPGQYLMRAELIALHNAGSQAGAQFYIGCAQINVTGGGSASPSNTVSFPGAYSASDPGILINIYGGSGKTDNGGKPYQIPGPALFTCPAGGSGGSSPAPATTASTPKPTSASAPKPVSTTASTPKPTNGSGSGTGAAHSTKCGGSKPAATTKASNPQPTNGGNSAVRAAALYGQCGGKGWTGPTSCASGTCKFSNDWYSQCLP.

Residues methionine 1–alanine 16 form the signal peptide. Cu(2+) is bound by residues histidine 17 and histidine 99. Cystine bridges form between cysteine 55-cysteine 185 and cysteine 155-cysteine 243. O2 is bound by residues histidine 171 and glutamine 180. Tyrosine 182 lines the Cu(2+) pocket. N-linked (GlcNAc...) asparagine glycans are attached at residues asparagine 189 and asparagine 284. The interval proline 244–serine 320 is disordered. Residues serine 251 to threonine 296 show a composition bias toward low complexity. Over residues threonine 307–asparagine 319 the composition is skewed to polar residues. The region spanning arginine 323 to leucine 358 is the CBM1 domain.

This sequence belongs to the polysaccharide monooxygenase AA9 family. The cofactor is Cu(2+).

The protein localises to the secreted. It catalyses the reaction [(1-&gt;4)-beta-D-glucosyl]n+m + reduced acceptor + O2 = 4-dehydro-beta-D-glucosyl-[(1-&gt;4)-beta-D-glucosyl]n-1 + [(1-&gt;4)-beta-D-glucosyl]m + acceptor + H2O.. Its activity is regulated as follows. Activity in inhibited by excessive amounts of H(2)O(2). Lytic polysaccharide monooxygenase (LPMO) that depolymerizes crystalline and amorphous polysaccharides via the oxidation of scissile alpha- or beta-(1-4)-glycosidic bonds, yielding C4 oxidation products. Catalysis by LPMOs requires the reduction of the active-site copper from Cu(II) to Cu(I) by a reducing agent and H(2)O(2) or O(2) as a cosubstrate. Degrades various hemicelluloses, in particular xyloglucan. Active on tamarind xyloglucan and konjac glucomannan. Acts on the glucose backbone of xyloglucan, accepting various substitutions (xylose, galactose) in almost allpositions. In contrast to all previously characterized LPMOs, which are active only on polysaccharides, is able to cleave soluble cello-oligosaccharides as short as a tetramer. The cello-oligosaccharide products released by this enzyme contain a C4 gemdiol/keto group at the non-reducing end. Binds to the inner wood cell wall layer and consumes enzymatically generated H(2)O(2). The protein is AA9 family lytic polysaccharide monooxygenase C (gh61-3) of Neurospora crassa (strain ATCC 24698 / 74-OR23-1A / CBS 708.71 / DSM 1257 / FGSC 987).